The sequence spans 633 residues: DNA mismatch repair protein MutL (633 aa).

2 disordered regions span residues 337–364 (RPDD…GEFG) and 383–405 (VGWS…TRPE). Positions 385–396 (WSGGSSASGGSS) are enriched in gly residues.

It belongs to the DNA mismatch repair MutL/HexB family.

In terms of biological role, this protein is involved in the repair of mismatches in DNA. It is required for dam-dependent methyl-directed DNA mismatch repair. May act as a 'molecular matchmaker', a protein that promotes the formation of a stable complex between two or more DNA-binding proteins in an ATP-dependent manner without itself being part of a final effector complex. This chain is DNA mismatch repair protein MutL, found in Pseudomonas aeruginosa (strain UCBPP-PA14).